Consider the following 243-residue polypeptide: Small ribosomal subunit protein uS2 (243 aa).

The protein belongs to the universal ribosomal protein uS2 family.

The chain is Small ribosomal subunit protein uS2 from Chromobacterium violaceum (strain ATCC 12472 / DSM 30191 / JCM 1249 / CCUG 213 / NBRC 12614 / NCIMB 9131 / NCTC 9757 / MK).